We begin with the raw amino-acid sequence, 221 residues long: GFP-like non-fluorescent chromoprotein (221 aa).

Residues 62–64 (QYG) constitute a cross-link (2-iminomethyl-5-imidazolinone (Gln-Gly)). Y63 carries the 2,3-didehydrotyrosine modification.

This sequence belongs to the GFP family. Homotetramer. Contains a chromophore consisting of modified amino acid residues. The chromophore is formed by autocatalytic backbone condensation between Xaa-N and Gly-(N+2), oxidation of Tyr-(N+1) to didehydrotyrosine, and formation of a double bond to the alpha-amino nitrogen of residue Xaa-N. Maturation of the chromophore requires nothing other than molecular oxygen. The precise stereochemistry of the tyrosine has not been determined.

In terms of biological role, non-fluorescent pigment protein that is lilac in color. The polypeptide is GFP-like non-fluorescent chromoprotein (Goniopora tenuidens (Anemone coral)).